A 320-amino-acid chain; its full sequence is Probable L-ascorbate peroxidase 5, chloroplastic (320 aa).

The transit peptide at 1-42 (MAVVHRILRRGLSAASPLPSLRGLLLVSPQELGRRPASSSSS) directs the protein to the chloroplast. H80 serves as the catalytic Proton acceptor. H209 serves as a coordination point for heme b. T210 lines the K(+) pocket. A disordered region spans residues 213 to 241 (RARPERSGWGKPETKYTENGPGAPGGQSW). Residues 214-228 (ARPERSGWGKPETKY) show a composition bias toward basic and acidic residues. Residues T242 and D249 each contribute to the K(+) site.

The protein belongs to the peroxidase family. Ascorbate peroxidase subfamily. Heme b serves as cofactor. Expressed in leaves, stems and flowers.

The protein localises to the plastid. The protein resides in the chloroplast stroma. It carries out the reaction L-ascorbate + H2O2 = L-dehydroascorbate + 2 H2O. Plays a key role in hydrogen peroxide removal. The polypeptide is Probable L-ascorbate peroxidase 5, chloroplastic (Oryza sativa subsp. japonica (Rice)).